The chain runs to 244 residues: Cobalt transport protein CbiM (244 aa).

An N-terminal signal peptide occupies residues 1 to 20 (MRKITFIAALLSLLPRYALA). A run of 6 helical transmembrane segments spans residues 31-51 (KWCL…LIYI), 63-83 (ILLG…LPSV), 95-115 (LGAI…VLLF), 117-137 (ALLL…SMAV), 161-181 (VFLG…LQLA), and 201-221 (IFAV…VIVL).

It belongs to the CbiM family. Forms an energy-coupling factor (ECF) transporter complex composed of an ATP-binding protein (A component, CbiO), a transmembrane protein (T component, CbiQ) and 2 possible substrate-capture proteins (S components, CbiM and CbiN) of unknown stoichimetry.

It is found in the cell membrane. It functions in the pathway cofactor biosynthesis; adenosylcobalamin biosynthesis. In terms of biological role, part of the energy-coupling factor (ECF) transporter complex CbiMNOQ involved in cobalt import. This chain is Cobalt transport protein CbiM, found in Thermosediminibacter oceani (strain ATCC BAA-1034 / DSM 16646 / JW/IW-1228P).